The sequence spans 307 residues: Small ribosomal subunit biogenesis GTPase RsgA (307 aa).

The 159-residue stretch at 82–240 folds into the CP-type G domain; sequence GRYGERIVVA…IADTPGLREV (159 aa). GTP is bound by residues 131–134 and 182–190; these read NKAD and GPSGVGKSS. Zn(2+) is bound by residues C264, C269, H271, and C277.

It belongs to the TRAFAC class YlqF/YawG GTPase family. RsgA subfamily. As to quaternary structure, monomer. Associates with 30S ribosomal subunit, binds 16S rRNA. Requires Zn(2+) as cofactor.

It localises to the cytoplasm. One of several proteins that assist in the late maturation steps of the functional core of the 30S ribosomal subunit. Helps release RbfA from mature subunits. May play a role in the assembly of ribosomal proteins into the subunit. Circularly permuted GTPase that catalyzes slow GTP hydrolysis, GTPase activity is stimulated by the 30S ribosomal subunit. This Gemmatimonas aurantiaca (strain DSM 14586 / JCM 11422 / NBRC 100505 / T-27) protein is Small ribosomal subunit biogenesis GTPase RsgA.